Reading from the N-terminus, the 76-residue chain is DNA-directed RNA polymerase subunit omega (76 aa).

It belongs to the RNA polymerase subunit omega family. In cyanobacteria the RNAP catalytic core is composed of 2 alpha, 1 beta, 1 beta', 1 gamma and 1 omega subunit. When a sigma factor is associated with the core the holoenzyme is formed, which can initiate transcription.

The catalysed reaction is RNA(n) + a ribonucleoside 5'-triphosphate = RNA(n+1) + diphosphate. Its function is as follows. Promotes RNA polymerase assembly. Latches the N- and C-terminal regions of the beta' subunit thereby facilitating its interaction with the beta and alpha subunits. In Synechocystis sp. (strain ATCC 27184 / PCC 6803 / Kazusa), this protein is DNA-directed RNA polymerase subunit omega (rpoZ).